A 129-amino-acid chain; its full sequence is Protein FYV12 (129 aa).

N-linked (GlcNAc...) asparagine glycosylation occurs at Asn91. Residues 109 to 128 (LMTTFLLYVLYVCIYISAFI) traverse the membrane as a helical segment.

Its subcellular location is the membrane. Functionally, involved in K1 killer toxin resistance. The polypeptide is Protein FYV12 (FYV12) (Saccharomyces cerevisiae (strain ATCC 204508 / S288c) (Baker's yeast)).